We begin with the raw amino-acid sequence, 93 residues long: Large ribosomal subunit protein uL23cz/uL23cy (93 aa).

It belongs to the universal ribosomal protein uL23 family. In terms of assembly, part of the 50S ribosomal subunit.

It localises to the plastid. Its subcellular location is the chloroplast. Its function is as follows. Binds to 23S rRNA. In Drimys granadensis, this protein is Large ribosomal subunit protein uL23cz/uL23cy (rpl23-A).